Reading from the N-terminus, the 756-residue chain is Polyribonucleotide nucleotidyltransferase (756 aa).

Residues Asp547 and Asp553 each coordinate Mg(2+). Positions 613-672 (PRITSVTIPVNKIGELIGPKGKTINAITEETGADVSIEEDGTVYISAATGEAADAAIDRV) constitute a KH domain. Residues 684-753 (GERFLGTVVK…NRGKISLVPV (70 aa)) form the S1 motif domain.

The protein belongs to the polyribonucleotide nucleotidyltransferase family. Mg(2+) serves as cofactor.

The protein localises to the cytoplasm. It carries out the reaction RNA(n+1) + phosphate = RNA(n) + a ribonucleoside 5'-diphosphate. Its function is as follows. Involved in mRNA degradation. Catalyzes the phosphorolysis of single-stranded polyribonucleotides processively in the 3'- to 5'-direction. The chain is Polyribonucleotide nucleotidyltransferase from Corynebacterium aurimucosum (strain ATCC 700975 / DSM 44827 / CIP 107346 / CN-1) (Corynebacterium nigricans).